A 274-amino-acid chain; its full sequence is NAD-dependent protein deacylase (274 aa).

The Deacetylase sirtuin-type domain maps to 4-274; the sequence is CLLPSSDMDA…GELLPKALAP (271 aa). 29-48 is a binding site for NAD(+); the sequence is GAGVSAESGVPTFRGAGGLW. Substrate-binding residues include Y73 and R76. Position 111–114 (111–114) interacts with NAD(+); sequence QNID. The active-site Proton acceptor is the H129. 4 residues coordinate Zn(2+): C137, C140, C178, and C183. Residues 220–222, 246–248, and C264 each bind NAD(+); these read GTS and NME.

Belongs to the sirtuin family. Class III subfamily. The cofactor is Zn(2+).

It localises to the mitochondrion. It catalyses the reaction N(6)-malonyl-L-lysyl-[protein] + NAD(+) + H2O = 2''-O-malonyl-ADP-D-ribose + nicotinamide + L-lysyl-[protein]. The catalysed reaction is N(6)-succinyl-L-lysyl-[protein] + NAD(+) + H2O = 2''-O-succinyl-ADP-D-ribose + nicotinamide + L-lysyl-[protein]. The enzyme catalyses N(6)-glutaryl-L-lysyl-[protein] + NAD(+) + H2O = 2''-O-glutaryl-ADP-D-ribose + nicotinamide + L-lysyl-[protein]. Functionally, NAD-dependent lysine demalonylase, desuccinylase and deglutarylase that specifically removes malonyl, succinyl and glutaryl groups on target proteins. Has weak NAD-dependent protein deacetylase activity; however this activity may not be physiologically relevant in vivo. In Daphnia pulex (Water flea), this protein is NAD-dependent protein deacylase.